We begin with the raw amino-acid sequence, 286 residues long: Cysteine-rich repeat secretory protein 57 (286 aa).

Positions 1 to 20 are cleaved as a signal peptide; it reads METTKKLSVLLCLFFTMNQA. Residues 21–265 are Extracellular-facing; it reads ISESDSDEHM…PSRSGSFSIR (245 aa). 2 Gnk2-homologous domains span residues 29-131 and 137-247; these read HMAT…DKFF and TKPN…TSNS. N-linked (GlcNAc...) asparagine glycosylation is found at asparagine 35, asparagine 40, asparagine 44, asparagine 60, asparagine 69, asparagine 90, asparagine 100, asparagine 108, asparagine 209, and asparagine 246. Residues 266–284 form a helical membrane-spanning segment; the sequence is GNNKILVGMILAVSVFAFL. The Cytoplasmic portion of the chain corresponds to 285–286; that stretch reads GL.

Belongs to the cysteine-rich repeat secretory protein family.

Its subcellular location is the membrane. This is Cysteine-rich repeat secretory protein 57 (CRRSP57) from Arabidopsis thaliana (Mouse-ear cress).